The sequence spans 642 residues: Forkhead box protein K2 (642 aa).

Positions 30–91 (VTIGRNSSQG…NGVFVDGVFQ (62 aa)) constitute an FHA domain. Positions 201-221 (QSENDKDASGGDSPKDDSKPP) are disordered. A compositionally biased stretch (basic and acidic residues) spans 203-219 (ENDKDASGGDSPKDDSK). A DNA-binding region (fork-head) is located at residues 219-314 (KPPYSYAQLI…EQAFRKRRPR (96 aa)). A DNA-binding; major groove region spans residues 261–279 (KGWQNSIRHNLSLNRYFIK). L271, S272, N274, and F277 together coordinate Mg(2+). DNA-binding; minor groove regions lie at residues 289–293 (KGSFW) and 309–314 (RKRRPR). Disordered regions lie at residues 323 to 359 (LGPL…REGS) and 589 to 615 (ASAS…KTDE). Polar residues-rich tracts occupy residues 327–353 (SSRS…TPES) and 589–605 (ASAS…QSEQ). Residues 606–615 (PDIKRGKTDE) show a composition bias toward basic and acidic residues.

In neurula embryos, expressed strongly in the future floor plate and weakly in the neural crest progenitor cells. As development progresses, expression becomes stronger in neural crest cells. At stage 24, expressed in the eye, brain, branchial arches and in the presomitic mesoderm in the posterior embryo. At stage 29, additionally expressed in the pronephric tubules. At stage 35, expressed in the migrating lateral muscle precursors of the abdomen. Additionally, the developing proctodeum and head structures including the branchial arches, eyes and otic vesicles continue to show expression. Expression also persists in the nephros.

The protein resides in the nucleus. Its subcellular location is the cytoplasm. Its function is as follows. Transcriptional regulator involved in different processes such as glucose metabolism, aerobic glycolysis and autophagy. Recognizes and binds the forkhead DNA sequence motif (5'-GTAAACA-3') and can both act as a transcription activator or repressor, depending on the context. Acts as a key regulator of metabolic reprogramming towards aerobic glycolysis, a process in which glucose is converted to lactate in the presence of oxygen. Acts as a negative regulator of autophagy in skeletal muscle: in response to starvation, enters the nucleus, binds the promoters of autophagy genes and represses their expression, preventing proteolysis of skeletal muscle proteins. The sequence is that of Forkhead box protein K2 from Xenopus laevis (African clawed frog).